Consider the following 417-residue polypeptide: NADH-quinone oxidoreductase subunit D (417 aa).

Belongs to the complex I 49 kDa subunit family. In terms of assembly, NDH-1 is composed of 14 different subunits. Subunits NuoB, C, D, E, F, and G constitute the peripheral sector of the complex.

Its subcellular location is the cell inner membrane. The enzyme catalyses a quinone + NADH + 5 H(+)(in) = a quinol + NAD(+) + 4 H(+)(out). NDH-1 shuttles electrons from NADH, via FMN and iron-sulfur (Fe-S) centers, to quinones in the respiratory chain. The immediate electron acceptor for the enzyme in this species is believed to be ubiquinone. Couples the redox reaction to proton translocation (for every two electrons transferred, four hydrogen ions are translocated across the cytoplasmic membrane), and thus conserves the redox energy in a proton gradient. The protein is NADH-quinone oxidoreductase subunit D of Coxiella burnetii (strain CbuG_Q212) (Coxiella burnetii (strain Q212)).